The primary structure comprises 239 residues: UDP-2,3-diacylglucosamine hydrolase (239 aa).

The Mn(2+) site is built by D8, H10, D41, N79, and H114. Residue 79-80 coordinates substrate; sequence NR. The substrate site is built by D122, S160, N164, K167, and H195. Residues H195 and H197 each contribute to the Mn(2+) site.

Belongs to the LpxH family. Requires Mn(2+) as cofactor.

It is found in the cell inner membrane. The catalysed reaction is UDP-2-N,3-O-bis[(3R)-3-hydroxytetradecanoyl]-alpha-D-glucosamine + H2O = 2-N,3-O-bis[(3R)-3-hydroxytetradecanoyl]-alpha-D-glucosaminyl 1-phosphate + UMP + 2 H(+). The protein operates within glycolipid biosynthesis; lipid IV(A) biosynthesis; lipid IV(A) from (3R)-3-hydroxytetradecanoyl-[acyl-carrier-protein] and UDP-N-acetyl-alpha-D-glucosamine: step 4/6. In terms of biological role, hydrolyzes the pyrophosphate bond of UDP-2,3-diacylglucosamine to yield 2,3-diacylglucosamine 1-phosphate (lipid X) and UMP by catalyzing the attack of water at the alpha-P atom. Involved in the biosynthesis of lipid A, a phosphorylated glycolipid that anchors the lipopolysaccharide to the outer membrane of the cell. The protein is UDP-2,3-diacylglucosamine hydrolase of Sodalis glossinidius (strain morsitans).